Consider the following 240-residue polypeptide: UDP-2,3-diacylglucosamine hydrolase (240 aa).

Residues aspartate 9, histidine 11, aspartate 43, asparagine 81, and histidine 116 each contribute to the Mn(2+) site. 81–82 (NR) contacts substrate. Substrate contacts are provided by aspartate 124, serine 162, lysine 166, lysine 169, and histidine 197. Mn(2+)-binding residues include histidine 197 and histidine 199.

It belongs to the LpxH family. Requires Mn(2+) as cofactor.

It localises to the cell inner membrane. It carries out the reaction UDP-2-N,3-O-bis[(3R)-3-hydroxytetradecanoyl]-alpha-D-glucosamine + H2O = 2-N,3-O-bis[(3R)-3-hydroxytetradecanoyl]-alpha-D-glucosaminyl 1-phosphate + UMP + 2 H(+). Its pathway is glycolipid biosynthesis; lipid IV(A) biosynthesis; lipid IV(A) from (3R)-3-hydroxytetradecanoyl-[acyl-carrier-protein] and UDP-N-acetyl-alpha-D-glucosamine: step 4/6. Its function is as follows. Hydrolyzes the pyrophosphate bond of UDP-2,3-diacylglucosamine to yield 2,3-diacylglucosamine 1-phosphate (lipid X) and UMP by catalyzing the attack of water at the alpha-P atom. Involved in the biosynthesis of lipid A, a phosphorylated glycolipid that anchors the lipopolysaccharide to the outer membrane of the cell. In Neisseria meningitidis serogroup B (strain ATCC BAA-335 / MC58), this protein is UDP-2,3-diacylglucosamine hydrolase.